Reading from the N-terminus, the 214-residue chain is Scytalone dehydratase-like protein mdpB (214 aa).

Residues Y40 and Y60 each contribute to the substrate site. Catalysis depends on residues H95 and H120.

The protein belongs to the scytalone dehydratase family.

The protein operates within secondary metabolite biosynthesis. Functionally, scytalone dehydratase-like protein; part of the gene cluster that mediates the biosynthesis of monodictyphenone, a prenyl xanthone derivative. The pathway begins with the synthesis of atrochrysone thioester by the polyketide synthase (PKS) mdpG. The atrochrysone carboxyl ACP thioesterase mdpF then breaks the thioester bond and releases the atrochrysone carboxylic acid from mdpG. The atrochrysone carboxylic acid is then converted to atrochrysone which is further transformed into emodin anthrone. The next step is performed by the anthrone oxygenase mdpH that catalyzes the oxidation of emodinanthrone to emodin. Emodin is further modified to yield monodictyphenone via several steps involving mdpB, mdpC mdpJ, mdpK and mdpL. These enzymes with xptA, xptB and xptC are also proposed to be involved in the synthesis of shamixanthone from emodin. Especially, direct reduction of emodin by the short chain dehydrogenase mdpC followed by dehydration catalyzed by the scytalone dehydratase-like protein mdpB gives loss of oxygen and formation of chrysophanol intermediate in two simple steps. This chain is Scytalone dehydratase-like protein mdpB, found in Emericella nidulans (strain FGSC A4 / ATCC 38163 / CBS 112.46 / NRRL 194 / M139) (Aspergillus nidulans).